We begin with the raw amino-acid sequence, 1353 residues long: Patatin-like phospholipase domain-containing protein ZK370.4 (1353 aa).

A helical membrane pass occupies residues 12 to 32 (IFLVTFIYNHVLLILFTVCII). The segment covering 49 to 64 (TPSSASSSATPSSRNS) has biased composition (low complexity). Disordered stretches follow at residues 49-188 (TPSS…STAF) and 199-218 (SRSYFRQNQENNKDTRVRPP). Over residues 91-123 (SPKSGTPTNTQTIEPPTSLNLNMVNSASGSNLS) the composition is skewed to polar residues. 2 stretches are compositionally biased toward basic residues: residues 126–138 (RRMRKRDWAKKLY) and 170–184 (PRRRSKHGNSSRRRQ). Residues 245 to 372 (LKML…VITR), 444 to 581 (FGLV…VLRR), and 570 to 692 (IYLP…LGQY) each bind a nucleoside 3',5'-cyclic phosphate. Residues 942 to 1108 (LVLGGGGARG…VNNVPADVMR (167 aa)) form the PNPLA domain. Positions 946 to 951 (GGGARG) match the GXGXXG motif. Residues 973-977 (GTSIG) carry the GXSXG motif. Residue Ser-975 is the Nucleophile of the active site. Asp-1095 serves as the catalytic Proton acceptor. The DGA/G signature appears at 1095-1097 (DGG). Disordered stretches follow at residues 1230–1249 (EKETRKFKRQQSRREKPDVS), 1274–1293 (SMSLNPSANGPVGRAGDHFL), and 1305–1353 (YEEE…PPSS). Residues 1328–1337 (GPPSSSSSGG) show a composition bias toward low complexity.

The protein belongs to the NTE family.

It is found in the membrane. This is Patatin-like phospholipase domain-containing protein ZK370.4 from Caenorhabditis elegans.